The following is a 447-amino-acid chain: NADH-quinone oxidoreductase subunit F (447 aa).

Position 61–70 (61–70) interacts with NAD(+); that stretch reads GRGGAGFSTG. 174–221 contributes to the FMN binding site; sequence GAGRYICGEETALINSLEGRRANPRAKPPFPAVFGLWGKPTCVNNVET. Residues Cys-352, Cys-355, Cys-358, and Cys-399 each coordinate [4Fe-4S] cluster.

Belongs to the complex I 51 kDa subunit family. As to quaternary structure, composed of 13 different subunits. Subunits NuoCD, E, F, and G constitute the peripheral sector of the complex. It depends on [4Fe-4S] cluster as a cofactor. The cofactor is FMN.

It carries out the reaction a quinone + NADH + 5 H(+)(in) = a quinol + NAD(+) + 4 H(+)(out). In terms of biological role, NDH-1 shuttles electrons from NADH, via FMN and iron-sulfur (Fe-S) centers, to quinones in the respiratory chain. Couples the redox reaction to proton translocation (for every two electrons transferred, four hydrogen ions are translocated across the cytoplasmic membrane), and thus conserves the redox energy in a proton gradient. The chain is NADH-quinone oxidoreductase subunit F (nuoF) from Buchnera aphidicola subsp. Schizaphis graminum (strain Sg).